Consider the following 584-residue polypeptide: Protein spire homolog 1 (584 aa).

The segment at 1-30 is disordered; the sequence is MANTVEADGSNDEGYEAAEEGPEDEEDEKR. A KIND domain is found at 1–73; that stretch reads MANTVEADGS…RALFAETMEL (73 aa). Positions 9 to 28 are enriched in acidic residues; the sequence is GSNDEGYEAAEEGPEDEEDE. A coiled-coil region spans residues 71-99; that stretch reads MELHTFLAKVKSAKENLKKIQEMEKSDES. 2 consecutive WH2 domains span residues 147 to 165 and 211 to 228; these read PYEM…LRKV and LHER…LRPV. A compositionally biased stretch (basic and acidic residues) spans 224–238; it reads KLRPVSPEEIRRSRL. Residues 224–366 form a disordered region; it reads KLRPVSPEEI…PTNVRQFLPP (143 aa). Ser229 carries the post-translational modification Phosphoserine. Positions 242-272 are enriched in polar residues; sequence TPESTKNLMESSMVNGGLTSQTKENGLSSAE. Phosphoserine occurs at positions 292, 293, and 295. A compositionally biased stretch (low complexity) spans 302–320; it reads KSTSSSSVSPSFPEEPVLE. Thr337 is modified (phosphothreonine). Positions 340 to 356 are enriched in basic and acidic residues; that stretch reads PERRQPPQRRHSIEKET. Residues 357–366 show a composition bias toward polar residues; the sequence is PTNVRQFLPP. The tract at residues 384–404 is spir-box; sequence LALTVEEVMHIRQVLVKAELE. Ser506, Ser510, and Ser563 each carry phosphoserine.

It belongs to the spire family. As to quaternary structure, interacts with FMN2.

The protein localises to the cytoplasm. It is found in the cytoskeleton. It localises to the cytosol. The protein resides in the cleavage furrow. Its subcellular location is the perinuclear region. The protein localises to the cell membrane. It is found in the cytoplasmic vesicle membrane. In terms of biological role, acts as an actin nucleation factor, remains associated with the slow-growing pointed end of the new filament. Involved in intracellular vesicle transport along actin fibers, providing a novel link between actin cytoskeleton dynamics and intracellular transport. Required for asymmetric spindle positioning and asymmetric cell division during meiosis. Required for normal formation of the cleavage furrow and for polar body extrusion during female germ cell meiosis. Also acts in the nucleus: together with FMN2, promotes assembly of nuclear actin filaments in response to DNA damage in order to facilitate movement of chromatin and repair factors after DNA damage. In addition, promotes innate immune signaling downstream of dsRNA sensing. Mechanistically, contributes to IRF3 phosphorylation and activation downstream of MAVS and upstream of TBK1. This Macaca fascicularis (Crab-eating macaque) protein is Protein spire homolog 1 (SPIRE1).